We begin with the raw amino-acid sequence, 725 residues long: ABC transporter G family member 19 (725 aa).

The ABC transporter domain maps to 73 to 325 (LNFNNLQYDV…FSDFGRPIPE (253 aa)). 117–124 (GASGAGKS) is an ATP binding site. One can recognise an ABC transmembrane type-2 domain in the interval 419–629 (FETFILAKRY…PYEAVLINEF (211 aa)). The next 7 membrane-spanning stretches (helical) occupy residues 438–458 (LVGT…TVYW), 473–493 (LFAF…PVFI), 515–535 (ISHS…FSAI), 537–557 (FWTV…LLIY), 577–597 (IMLC…LSGF), 606–626 (FYWT…AVLI), and 698–718 (LWIT…ALLF).

It belongs to the ABC transporter superfamily. ABCG family. Eye pigment precursor importer (TC 3.A.1.204) subfamily.

The protein localises to the vacuole membrane. Its function is as follows. Confers selective resistance to kanamycin. The chain is ABC transporter G family member 19 (ABCG19) from Arabidopsis thaliana (Mouse-ear cress).